The chain runs to 418 residues: Putative FBD-associated F-box protein At5g56560 (418 aa).

One can recognise an F-box domain in the interval 4-60 (QTRLSDLPDELLLKILSALPMFKVTLATRLISRRWKGPWKLVPDVTFDDDDIPFKSF). The 51-residue stretch at 340 to 390 (LWEEPAVVAKCLSEHLEIFEWRQYEGTEQERNVAGYILANATCLKMATFST) folds into the FBD domain.

This is Putative FBD-associated F-box protein At5g56560 from Arabidopsis thaliana (Mouse-ear cress).